A 582-amino-acid polypeptide reads, in one-letter code: Semenogelin-2 (582 aa).

The N-terminal stretch at Met-1–Gly-23 is a signal peptide. Disordered stretches follow at residues Cys-26–Ile-65, Gly-132–Tyr-159, Asn-272–Glu-295, Thr-318–Leu-358, Glu-379–Arg-417, and Glu-439–Thr-582. 2 stretches are compositionally biased toward polar residues: residues Gln-31 to Pro-40 and Arg-137 to Tyr-159. The span at Lys-325–Gln-335 shows a compositional bias: polar residues. The segment covering Gly-336–Lys-345 has biased composition (basic and acidic residues). 4 stretches are compositionally biased toward polar residues: residues Glu-379–Gln-397, Glu-439–Gln-457, Lys-487–Phe-496, and Ser-506–Lys-524. Basic and acidic residues-rich tracts occupy residues Gly-525 to Glu-552 and Thr-559 to Thr-582.

This sequence belongs to the semenogelin family. Interacts with SERPINA5.

It is found in the secreted. Functionally, participates in the formation of a gel matrix (sperm coagulum) entrapping the accessory gland secretions and ejaculated spermatozoa. In Hylobates lar (Lar gibbon), this protein is Semenogelin-2 (SEMG2).